A 1061-amino-acid polypeptide reads, in one-letter code: Ribonuclease E (1061 aa).

An S1 motif domain is found at 39 to 119 (ANIYKGKITR…GNKGAALTTF (81 aa)). Residues 57 to 112 (FVDYGAERHGFLPLKEIAREYFPANYSAHGRPNIKDVLREGQEVIVQIDKEERGNK) form an interaction with RNA region. Positions 169–170 (RT) are interaction with RNA 5'-terminal monophosphate. Residues Asp303 and Asp346 each contribute to the Mg(2+) site. The Zn(2+) site is built by Cys404 and Cys407. Residues 404-407 (CPRC) are required for zinc-mediated homotetramerization and catalytic activity. Disordered stretches follow at residues 532-565 (FAMPDVPPAPTPAEPAAPVVAPAPKAAPATPAAP), 586-731 (EETK…KVRY), and 752-822 (EPIV…RYPT). The span at 536–546 (DVPPAPTPAEP) shows a compositional bias: pro residues. Residues 547–565 (AAPVVAPAPKAAPATPAAP) show a composition bias toward low complexity. 3 stretches are compositionally biased toward basic and acidic residues: residues 598-608 (AEAKPERQQDR), 615-640 (NRRDRNERRDTRSERTEGSDNREENR), and 652-690 (ETRESRQQAEVTEKARTADEQQAPRRERSRRRNDDKRQA). The span at 796–814 (RRSRRSPRHLRVSGQRRRR) shows a compositional bias: basic residues. The interval 833-850 (ASPELASGKVWIRYPIVR) is interaction with enolase. Residues 1021-1061 (EAPRHSDWQRPTFAFEGKGAAGGHTATHHASAAPARPQPVE) form an interaction with PNPase region. A disordered region spans residues 1031–1061 (PTFAFEGKGAAGGHTATHHASAAPARPQPVE). Low complexity predominate over residues 1043-1055 (GHTATHHASAAPA).

The protein belongs to the RNase E/G family. RNase E subfamily. As to quaternary structure, component of the RNA degradosome, which is a multiprotein complex involved in RNA processing and mRNA degradation. Within the RNA degradosome, RNase E assembles into a homotetramer formed by a dimer of dimers. Tetramerization is essential for catalytic activity, but not for RNA-binding. Interacts with RhlB, PNPase (pnp) and enolase (eno). Interacts with DeaD at reduced temperature. The cofactor is Zn(2+). It depends on Mg(2+) as a cofactor.

It is found in the cytoplasm. Its subcellular location is the cell inner membrane. It catalyses the reaction Endonucleolytic cleavage of single-stranded RNA in A- and U-rich regions.. Its activity is regulated as follows. The presence of a 5'-monophosphate on substrate RNA accelerates its cleavage by catalytically activating the enzyme. Binding to the membrane stabilizes protein structure and increases affinity for the substrate. Endoribonuclease that plays a central role in RNA processing and decay. Required for the maturation of 5S and 16S rRNAs and the majority of tRNAs. Also involved in the degradation of most mRNAs. Can also process other RNA species, such as RNAI, a molecule that controls the replication of ColE1 plasmid, and the cell division inhibitor DicF-RNA. It initiates the decay of RNAs by cutting them internally near their 5'-end. It is able to remove poly(A) tails by an endonucleolytic process. Required to initiate rRNA degradation during both starvation and quality control; acts after RNase PH (rph) exonucleolytically digests the 3'-end of the 16S rRNA. Degradation of 16S rRNA leads to 23S rRNA degradation. Processes the 3 tRNA(Pro) precursors immediately after the 3'-CCA to generate the mature ends. Its function is as follows. Prefers 5'-monophosphorylated substrates over 5'-triphosphorylated substrates. 5'-monophosphate-assisted cleavage requires at least 2 and preferably 3 or more unpaired 5'-terminal nucleotides. The optimal spacing between the 5' end and the scissile phosphate appears to be 8 nucleotides. Any sequence of unpaired nucleotides at the 5'-end is tolerated. The sequence is that of Ribonuclease E from Escherichia coli (strain K12).